We begin with the raw amino-acid sequence, 308 residues long: uncharacterized protein (308 aa).

In terms of domain architecture, S4 RNA-binding spans 11-87; the sequence is KRLDSLLASL…LKLEVLFEDK (77 aa). Residue D131 is part of the active site.

The protein belongs to the pseudouridine synthase RluA family.

It catalyses the reaction a uridine in RNA = a pseudouridine in RNA. This is an uncharacterized protein from Mycoplasma genitalium (strain ATCC 33530 / DSM 19775 / NCTC 10195 / G37) (Mycoplasmoides genitalium).